Reading from the N-terminus, the 206-residue chain is Endoplasmic reticulum transmembrane protein YET-like (206 aa).

Topologically, residues Met1 to Glu2 are lumenal. Residues Phe3–Met23 form a helical membrane-spanning segment. The Cytoplasmic portion of the chain corresponds to Leu24–Asn46. The helical transmembrane segment at Ala47–Val67 threads the bilayer. Topologically, residues Asn68 to Asn101 are lumenal. A helical transmembrane segment spans residues Ser102–Ile122. Over Ser123–Asp206 the chain is Cytoplasmic. Positions Lys140 to Lys198 form a coiled coil. The Di-lysine motif motif lies at Lys203–Asp206.

This sequence belongs to the BCAP29/BCAP31 family.

The protein localises to the endoplasmic reticulum membrane. Functionally, may play a role in anterograde transport of membrane proteins from the endoplasmic reticulum to the Golgi. This chain is Endoplasmic reticulum transmembrane protein YET-like, found in Dictyostelium discoideum (Social amoeba).